Reading from the N-terminus, the 329-residue chain is Prostaglandin reductase 1 (329 aa).

Threonine 18 is subject to Phosphothreonine. Serine 20 bears the Phosphoserine mark. Residues 152 to 155 (GAVG), lysine 178, tyrosine 193, asparagine 217, 239 to 245 (CGAISVY), 270 to 272 (FIV), and asparagine 321 contribute to the NADP(+) site. Lysine 178 is subject to N6-(2-hydroxyisobutyryl)lysine; alternate. Lysine 178 carries the post-translational modification N6-acetyllysine; alternate.

Belongs to the NADP-dependent oxidoreductase L4BD family. As to quaternary structure, monomer or homodimer. As to expression, detected in small intestine, kidney, liver, spleen and stomach (at protein level). Detected in small intestine, kidney and liver.

It localises to the cytoplasm. The catalysed reaction is 13,14-dihydro-15-oxo-prostaglandin E1 + NADP(+) = 15-oxoprostaglandin E1 + NADPH + H(+). It carries out the reaction 13,14-dihydro-15-oxo-prostaglandin E2 + NAD(+) = 15-oxoprostaglandin E2 + NADH + H(+). It catalyses the reaction 13,14-dihydro-15-oxo-prostaglandin F1alpha + NADP(+) = 15-oxoprostaglandin F1alpha + NADPH + H(+). The enzyme catalyses 13,14-dihydro-15-oxo-PGF2alpha + NADP(+) = 15-oxoprostaglandin F2alpha + NADPH + H(+). The catalysed reaction is leukotriene B4 + NADP(+) = 12-oxo-leukotriene B4 + NADPH + H(+). It carries out the reaction 20-hydroxy-leukotriene B4 + NADP(+) = 12-oxo-20-hydroxy-leukotriene B4 + NADPH + H(+). It catalyses the reaction 6-trans-leukotriene B4 + NADP(+) = 12-oxo-(5S)-hydroxy-(6E,8E,10E,14Z)-eicosatetraenoate + NADPH + H(+). The enzyme catalyses (5S,12S)-dihydroxy-(6E,10E,12E,14Z)-eicosatetraenoate + NADP(+) = 12-oxo-(5S)-hydroxy-(6E,8E,10E,14Z)-eicosatetraenoate + NADPH + H(+). The catalysed reaction is an n-alkanal + NADP(+) = an alk-2-enal + NADPH + H(+). It carries out the reaction hexanal + NADP(+) = (E)-hex-2-enal + NADPH + H(+). It catalyses the reaction octanal + NADP(+) = (2E)-octenal + NADPH + H(+). The enzyme catalyses decanal + NADP(+) = (2E)-decenal + NADPH + H(+). The catalysed reaction is dodecanal + NADP(+) = (2E)-dodecenal + NADPH + H(+). It carries out the reaction 4-hydroxynonanal + NADP(+) = (E)-4-hydroxynon-2-enal + NADPH + H(+). It catalyses the reaction pentan-2-one + NADP(+) = (E)-pent-3-en-2-one + NADPH + H(+). The enzyme catalyses nonan-2-one + NADP(+) = (3E)-nonen-2-one + NADPH + H(+). In terms of biological role, NAD(P)H-dependent oxidoreductase involved in metabolic inactivation of pro- and anti-inflammatory eicosanoids: prostaglandins (PG), leukotrienes (LT) and lipoxins (LX). Catalyzes with high efficiency the reduction of the 13,14 double bond of 15-oxoPGs, including 15-oxo-PGE1, 15-oxo-PGE2, 15-oxo-PGF1-alpha and 15-oxo-PGF2-alpha. Catalyzes with lower efficiency the oxidation of the hydroxyl group at C12 of LTB4 and its derivatives, converting them into biologically less active 12-oxo-LTB4 metabolites. Reduces 15-oxo-LXA4 to 13,14 dihydro-15-oxo-LXA4, enhancing neutrophil recruitment at the inflammatory site. Plays a role in metabolic detoxification of alkenals and ketones. Reduces alpha,beta-unsaturated alkenals and ketones, particularly those with medium-chain length, showing highest affinity toward (2E)-decenal and (3E)-3-nonen-2-one. May inactivate 4-hydroxy-2-nonenal, a cytotoxic lipid constituent of oxidized low-density lipoprotein particles. This chain is Prostaglandin reductase 1 (Ptgr1), found in Cavia porcellus (Guinea pig).